Here is a 20-residue protein sequence, read N- to C-terminus: Brevinin-1SPd (20 aa).

An intrachain disulfide couples C14 to C20.

Expressed by the skin glands.

It is found in the secreted. In terms of biological role, antimicrobial peptide with activity against Gram-negative and Gram-positive bacteria (MIC=13 uM against E.coli, MIC=3 uM against S.aureus) and fungi (MIC=3 uM against C.albicans). Shows hemolytic activity on human erythrocytes (HC(50)=8 uM). The chain is Brevinin-1SPd from Lithobates septentrionalis (Mink frog).